A 226-amino-acid polypeptide reads, in one-letter code: 7-cyano-7-deazaguanine synthase (226 aa).

10 to 20 (FSGGQDSTTLA) is an ATP binding site. 4 residues coordinate Zn(2+): C190, C205, C208, and C211.

This sequence belongs to the QueC family. Zn(2+) is required as a cofactor.

The catalysed reaction is 7-carboxy-7-deazaguanine + NH4(+) + ATP = 7-cyano-7-deazaguanine + ADP + phosphate + H2O + H(+). The protein operates within purine metabolism; 7-cyano-7-deazaguanine biosynthesis. Catalyzes the ATP-dependent conversion of 7-carboxy-7-deazaguanine (CDG) to 7-cyano-7-deazaguanine (preQ(0)). This Helicobacter pylori (strain ATCC 700392 / 26695) (Campylobacter pylori) protein is 7-cyano-7-deazaguanine synthase.